Here is a 403-residue protein sequence, read N- to C-terminus: Phosphoglycerate kinase (403 aa).

Residues 21–23 (DFN), Arg36, 59–62 (HLGR), Arg119, and Arg154 each bind substrate. Residues Lys207, Gly299, Glu330, and 357–360 (GGDA) contribute to the ATP site.

It belongs to the phosphoglycerate kinase family. In terms of assembly, monomer.

The protein resides in the cytoplasm. The enzyme catalyses (2R)-3-phosphoglycerate + ATP = (2R)-3-phospho-glyceroyl phosphate + ADP. The protein operates within carbohydrate degradation; glycolysis; pyruvate from D-glyceraldehyde 3-phosphate: step 2/5. In Chlamydia caviae (strain ATCC VR-813 / DSM 19441 / 03DC25 / GPIC) (Chlamydophila caviae), this protein is Phosphoglycerate kinase.